A 383-amino-acid chain; its full sequence is Succinyl-diaminopimelate desuccinylase (383 aa).

His72 contacts Zn(2+). Residue Asp74 is part of the active site. Asp105 is a Zn(2+) binding site. Glu137 functions as the Proton acceptor in the catalytic mechanism. The Zn(2+) site is built by Glu138, Glu167, and His352.

This sequence belongs to the peptidase M20A family. DapE subfamily. Homodimer. Zn(2+) is required as a cofactor. Requires Co(2+) as cofactor.

It carries out the reaction N-succinyl-(2S,6S)-2,6-diaminopimelate + H2O = (2S,6S)-2,6-diaminopimelate + succinate. It functions in the pathway amino-acid biosynthesis; L-lysine biosynthesis via DAP pathway; LL-2,6-diaminopimelate from (S)-tetrahydrodipicolinate (succinylase route): step 3/3. Its function is as follows. Catalyzes the hydrolysis of N-succinyl-L,L-diaminopimelic acid (SDAP), forming succinate and LL-2,6-diaminopimelate (DAP), an intermediate involved in the bacterial biosynthesis of lysine and meso-diaminopimelic acid, an essential component of bacterial cell walls. The protein is Succinyl-diaminopimelate desuccinylase of Ehrlichia ruminantium (strain Welgevonden).